Consider the following 692-residue polypeptide: Threonine--tRNA ligase (692 aa).

The segment at 1 to 20 is disordered; the sequence is MSAPAQPAPGVDGGDPSQAR. A TGS domain is found at 1–74; that stretch reads MSAPAQPAPG…DVDTDITPVA (74 aa). Residues 269 to 575 form a catalytic region; that stretch reads DHRKLGVELD…LTEHYAGAFP (307 aa). 3 residues coordinate Zn(2+): C374, H425, and H552.

Belongs to the class-II aminoacyl-tRNA synthetase family. Homodimer. Zn(2+) serves as cofactor.

The protein localises to the cytoplasm. It catalyses the reaction tRNA(Thr) + L-threonine + ATP = L-threonyl-tRNA(Thr) + AMP + diphosphate + H(+). In terms of biological role, catalyzes the attachment of threonine to tRNA(Thr) in a two-step reaction: L-threonine is first activated by ATP to form Thr-AMP and then transferred to the acceptor end of tRNA(Thr). Also edits incorrectly charged L-seryl-tRNA(Thr). The sequence is that of Threonine--tRNA ligase from Mycobacterium tuberculosis (strain CDC 1551 / Oshkosh).